We begin with the raw amino-acid sequence, 1039 residues long: Protein male-specific lethal-1 (1039 aa).

A compositionally biased stretch (basic residues) spans 1 to 13 (MDKRFKWPPKKRA). Disordered regions lie at residues 1-44 (MDKR…HLHQ) and 171-199 (RRKN…QKLI). Residue serine 18 is modified to Phosphoserine. Serine 238 carries the phosphoserine modification. Disordered regions lie at residues 244 to 266 (HAGA…GEFN), 358 to 454 (GQSV…GNQN), 485 to 691 (KKDK…EIDV), and 729 to 799 (IYPP…SSTT). Positions 255–266 (KRSESKGRGEFN) are enriched in basic and acidic residues. Residues 368 to 392 (EEDDDEDDEDDENSDKDDDSEEDDY) show a composition bias toward acidic residues. Residues 397 to 407 (SDADVNARTEE) show a composition bias toward basic and acidic residues. Positions 431 to 445 (AHSTPNHQQKSSTQA) are enriched in polar residues. Serine 433 carries the phosphoserine modification. Position 434 is a phosphothreonine (threonine 434). 2 positions are modified to phosphoserine: serine 492 and serine 496. 2 stretches are compositionally biased toward basic and acidic residues: residues 504–515 (PHQEDAIVDHNA) and 523–570 (PKPD…DAPK). 2 stretches are compositionally biased toward polar residues: residues 581-592 (TKTSSRESTLPK) and 609-625 (NHQS…TQRL). Serine 585 carries the post-translational modification Phosphoserine. Residue threonine 659 is modified to Phosphothreonine. A phosphoserine mark is found at serine 682 and serine 684. Threonine 747 is subject to Phosphothreonine. Phosphoserine is present on serine 749. Phosphothreonine is present on residues threonine 750, threonine 751, and threonine 753. The segment covering 759–768 (QHAVTSSMDQ) has biased composition (polar residues). Serine 764 and serine 765 each carry phosphoserine. Threonine 788 is modified (phosphothreonine). Serine 810 is subject to Phosphoserine. Phosphothreonine is present on residues threonine 813 and threonine 832. The 119-residue stretch at 865-983 (SLEIPKWRDV…EARDDFGVPW (119 aa)) folds into the PEHE domain. Serine 879 and serine 889 each carry phosphoserine. Positions 886–904 (ELLSDATFERRHQKYVKDE) are interaction with mof HAT domain. A disordered region spans residues 1011–1039 (IPTTAAEARHQENHSSYVFPKRRKRQKNR). The residue at position 1014 (threonine 1014) is a Phosphothreonine. The residue at position 1025 (serine 1025) is a Phosphoserine. Residues 1030 to 1039 (PKRRKRQKNR) show a composition bias toward basic residues. Positions 1032-1037 (RRKRQK) match the Nuclear localization signal motif.

The protein belongs to the msl-1 family. Component of the male-specific lethal (MSL) histone acetyltransferase complex, composed of mof, mle, msl-1, msl-2 and msl-3 proteins, as well as roX1 and roX2 non-coding RNAs. Interacts (via PEHE domain) with mof (via HAT domain) and msl-3 (via MRG domain); both interactions are direct. Interacts with tamo via the nuclear localization signal. Component of a maternal MSL subcomplex composed of mof, msl-1 and msl-3. Phosphorylation at Ser-18, Thr743, Thr-747 and Thr-751 is required to promote phosphorylation of 'Ser-5' of the C-terminal heptapeptide repeat domain (CTD) of the largest RNA polymerase II subunit Polr2A. Phosphorylated by Cdk7 in vitro. In contrast, phosphorylation at Ser-18, Thr743, Thr-747 and Thr-751 does not affect its role in dosage compensation in males. In terms of processing, ubiquitinated by msl-2.

The protein resides in the nucleus. It is found in the chromosome. Its function is as follows. Component of the male-specific lethal (MSL) histone acetyltransferase complex, a multiprotein complex essential for elevating transcription of the single X chromosome in the male (X chromosome dosage compensation). The MSL complex specifically associates with the single X chromosome in males and mediates formation of H4K16ac, promoting a two-fold activation of X chromosome. In complex with msl-2, promotes ubiquitination of histone H2B. In addition to its role in dosage compensation in males, regulates the activity of gene promoters: acts together with Cdk7 to promote phosphorylation of 'Ser-5' of the C-terminal heptapeptide repeat domain (CTD) of the largest RNA polymerase II subunit Polr2A. The polypeptide is Protein male-specific lethal-1 (Drosophila melanogaster (Fruit fly)).